Here is a 95-residue protein sequence, read N- to C-terminus: Large ribosomal subunit protein bL21 (95 aa).

This sequence belongs to the bacterial ribosomal protein bL21 family. In terms of assembly, part of the 50S ribosomal subunit. Contacts protein L20.

Its function is as follows. This protein binds to 23S rRNA in the presence of protein L20. The protein is Large ribosomal subunit protein bL21 of Prosthecochloris vibrioformis (Chlorobium vibrioforme).